Reading from the N-terminus, the 456-residue chain is MLNSAMSVVILAAGKGTRMYSDIPKVLHTLAGKPMVQHVIDAATKLGAAQVHLVYGHGGELLKQTLKDDKLNWVLQAEQLGTGHAMQQAAPFFSDDEDILMLYGDVPLISVETLQRLRDAKPQGGIGLLTVKLDDPSGYGRITRENGKVTGIVEHKDATDEQRQIQEINTGILIANGADLKRWLSKLTNNNAQGEYYITDIIALAYQEGREIAAVHPARISETDGVNNRLQLSRLERIYQAEQAEKLLLSGVMLRDPARFDLRGTLHCGMDVEIDANVIIEGYVTLGHRVKIGAGCIIKNSVIGDDCEISPYSVVEDAHLEAACTIGPFARLRPGAELLAGAHVGNFVEMKKARLGKGSKAGHLTYLGDAEIGDNVNIGAGTITCNYDGANKFKTVIGDDVFVGSDTQLVAPVTVGKGATIAAGTTVTRNVADNELVLSRVPQVHKQGWQRPVKKK.

The interval 1–229 (MLNSAMSVVI…ISETDGVNNR (229 aa)) is pyrophosphorylase. UDP-N-acetyl-alpha-D-glucosamine-binding positions include 11–14 (LAAG), lysine 25, glutamine 76, 81–82 (GT), 103–105 (YGD), glycine 140, glutamate 154, asparagine 169, and asparagine 227. A Mg(2+)-binding site is contributed by aspartate 105. Residue asparagine 227 coordinates Mg(2+). Residues 230 to 250 (LQLSRLERIYQAEQAEKLLLS) are linker. An N-acetyltransferase region spans residues 251-456 (GVMLRDPARF…QGWQRPVKKK (206 aa)). Arginine 333 and lysine 351 together coordinate UDP-N-acetyl-alpha-D-glucosamine. The Proton acceptor role is filled by histidine 363. UDP-N-acetyl-alpha-D-glucosamine is bound by residues tyrosine 366 and asparagine 377. Acetyl-CoA contacts are provided by residues alanine 380, 386 to 387 (NY), serine 405, alanine 423, and arginine 440.

It in the N-terminal section; belongs to the N-acetylglucosamine-1-phosphate uridyltransferase family. The protein in the C-terminal section; belongs to the transferase hexapeptide repeat family. As to quaternary structure, homotrimer. Mg(2+) serves as cofactor.

The protein resides in the cytoplasm. The catalysed reaction is alpha-D-glucosamine 1-phosphate + acetyl-CoA = N-acetyl-alpha-D-glucosamine 1-phosphate + CoA + H(+). It catalyses the reaction N-acetyl-alpha-D-glucosamine 1-phosphate + UTP + H(+) = UDP-N-acetyl-alpha-D-glucosamine + diphosphate. It participates in nucleotide-sugar biosynthesis; UDP-N-acetyl-alpha-D-glucosamine biosynthesis; N-acetyl-alpha-D-glucosamine 1-phosphate from alpha-D-glucosamine 6-phosphate (route II): step 2/2. The protein operates within nucleotide-sugar biosynthesis; UDP-N-acetyl-alpha-D-glucosamine biosynthesis; UDP-N-acetyl-alpha-D-glucosamine from N-acetyl-alpha-D-glucosamine 1-phosphate: step 1/1. It functions in the pathway bacterial outer membrane biogenesis; LPS lipid A biosynthesis. Its function is as follows. Catalyzes the last two sequential reactions in the de novo biosynthetic pathway for UDP-N-acetylglucosamine (UDP-GlcNAc). The C-terminal domain catalyzes the transfer of acetyl group from acetyl coenzyme A to glucosamine-1-phosphate (GlcN-1-P) to produce N-acetylglucosamine-1-phosphate (GlcNAc-1-P), which is converted into UDP-GlcNAc by the transfer of uridine 5-monophosphate (from uridine 5-triphosphate), a reaction catalyzed by the N-terminal domain. The polypeptide is Bifunctional protein GlmU (Salmonella dublin (strain CT_02021853)).